We begin with the raw amino-acid sequence, 432 residues long: Adenylosuccinate synthetase (432 aa).

GTP is bound by residues 13-19 (GDEGKGK) and 41-43 (GHT). Aspartate 14 acts as the Proton acceptor in catalysis. Aspartate 14 and glycine 41 together coordinate Mg(2+). Residues 14–17 (DEGK), 39–42 (NAGH), threonine 130, arginine 144, glutamine 225, threonine 240, and arginine 304 each bind IMP. Histidine 42 acts as the Proton donor in catalysis. Residue 300-306 (AVTGRPR) coordinates substrate. GTP contacts are provided by residues arginine 306, 332–334 (KLD), and 415–417 (STG).

This sequence belongs to the adenylosuccinate synthetase family. Homodimer. Mg(2+) is required as a cofactor.

Its subcellular location is the cytoplasm. The catalysed reaction is IMP + L-aspartate + GTP = N(6)-(1,2-dicarboxyethyl)-AMP + GDP + phosphate + 2 H(+). The protein operates within purine metabolism; AMP biosynthesis via de novo pathway; AMP from IMP: step 1/2. In terms of biological role, plays an important role in the de novo pathway of purine nucleotide biosynthesis. Catalyzes the first committed step in the biosynthesis of AMP from IMP. The protein is Adenylosuccinate synthetase of Haemophilus influenzae (strain PittEE).